The sequence spans 218 residues: Glutathione S-transferase class-mu 26 kDa isozyme 7 (218 aa).

In terms of domain architecture, GST N-terminal spans 2–83 (PAKLGYWKIR…YIADKHGMLG (82 aa)). Residues 7–8 (YW), 41–45 (WLGDK), 54–55 (NL), and 67–68 (QS) contribute to the glutathione site. In terms of domain architecture, GST C-terminal spans 85 to 203 (TPEERARISM…KSERFIKWPL (119 aa)). Tyr-111 is a substrate binding site.

It belongs to the GST superfamily. Mu family. Homodimer.

The enzyme catalyses RX + glutathione = an S-substituted glutathione + a halide anion + H(+). Functionally, conjugation of reduced glutathione to a wide number of exogenous and endogenous hydrophobic electrophiles. GST isoenzymes appear to play a central role in the parasite detoxification system. Other functions are also suspected including a role in increasing the solubility of haematin in the parasite gut. This Fasciola hepatica (Liver fluke) protein is Glutathione S-transferase class-mu 26 kDa isozyme 7.